A 603-amino-acid polypeptide reads, in one-letter code: Phosphoribosylformylglycinamidine synthase subunit PurL (603 aa).

Residue His32 is part of the active site. Positions 35 and 68 each coordinate ATP. Glu70 provides a ligand contact to Mg(2+). Substrate contacts are provided by residues 71 to 74 (SHNH) and Arg93. His72 acts as the Proton acceptor in catalysis. Position 94 (Asp94) interacts with Mg(2+). ATP is bound by residues Asp107 and 136-139 (GELR). 2 residues coordinate substrate: Gly189 and Gln208. Residue Asp236 participates in Mg(2+) binding. 280–282 (ESQ) contributes to the substrate binding site. Positions 388, 429, 442, and 477 each coordinate ATP. Position 478 (Asn478) interacts with Mg(2+). Residue Ser480 coordinates substrate. Residues Ser549 and His556 each contribute to the ATP site.

The protein belongs to the FGAMS family. As to quaternary structure, monomer. Part of the FGAM synthase complex composed of 1 PurL, 1 PurQ and 2 PurS subunits.

Its subcellular location is the cytoplasm. It catalyses the reaction N(2)-formyl-N(1)-(5-phospho-beta-D-ribosyl)glycinamide + L-glutamine + ATP + H2O = 2-formamido-N(1)-(5-O-phospho-beta-D-ribosyl)acetamidine + L-glutamate + ADP + phosphate + H(+). It participates in purine metabolism; IMP biosynthesis via de novo pathway; 5-amino-1-(5-phospho-D-ribosyl)imidazole from N(2)-formyl-N(1)-(5-phospho-D-ribosyl)glycinamide: step 1/2. Part of the phosphoribosylformylglycinamidine synthase complex involved in the purines biosynthetic pathway. Catalyzes the ATP-dependent conversion of formylglycinamide ribonucleotide (FGAR) and glutamine to yield formylglycinamidine ribonucleotide (FGAM) and glutamate. The FGAM synthase complex is composed of three subunits. PurQ produces an ammonia molecule by converting glutamine to glutamate. PurL transfers the ammonia molecule to FGAR to form FGAM in an ATP-dependent manner. PurS interacts with PurQ and PurL and is thought to assist in the transfer of the ammonia molecule from PurQ to PurL. The protein is Phosphoribosylformylglycinamidine synthase subunit PurL of Thermotoga maritima (strain ATCC 43589 / DSM 3109 / JCM 10099 / NBRC 100826 / MSB8).